A 429-amino-acid chain; its full sequence is Enolase (429 aa).

Glutamine 174 is a (2R)-2-phosphoglycerate binding site. Catalysis depends on glutamate 218, which acts as the Proton donor. Mg(2+)-binding residues include aspartate 254, glutamate 295, and aspartate 321. Residues lysine 346, arginine 375, serine 376, and lysine 397 each coordinate (2R)-2-phosphoglycerate. Residue lysine 346 is the Proton acceptor of the active site.

It belongs to the enolase family. It depends on Mg(2+) as a cofactor.

It is found in the cytoplasm. The protein resides in the secreted. It localises to the cell surface. It catalyses the reaction (2R)-2-phosphoglycerate = phosphoenolpyruvate + H2O. Its pathway is carbohydrate degradation; glycolysis; pyruvate from D-glyceraldehyde 3-phosphate: step 4/5. Functionally, catalyzes the reversible conversion of 2-phosphoglycerate (2-PG) into phosphoenolpyruvate (PEP). It is essential for the degradation of carbohydrates via glycolysis. The polypeptide is Enolase (Methanosarcina acetivorans (strain ATCC 35395 / DSM 2834 / JCM 12185 / C2A)).